We begin with the raw amino-acid sequence, 391 residues long: 8-amino-7-oxononanoate synthase (391 aa).

108-109 (GF) is a pyridoxal 5'-phosphate binding site. Histidine 133 provides a ligand contact to substrate. Positions 180, 208, and 236 each coordinate pyridoxal 5'-phosphate. Lysine 239 is modified (N6-(pyridoxal phosphate)lysine). A substrate-binding site is contributed by threonine 353.

Belongs to the class-II pyridoxal-phosphate-dependent aminotransferase family. BioF subfamily. In terms of assembly, homodimer. Pyridoxal 5'-phosphate serves as cofactor.

The enzyme catalyses 6-carboxyhexanoyl-[ACP] + L-alanine + H(+) = (8S)-8-amino-7-oxononanoate + holo-[ACP] + CO2. Its pathway is cofactor biosynthesis; biotin biosynthesis. Functionally, catalyzes the decarboxylative condensation of pimeloyl-[acyl-carrier protein] and L-alanine to produce 8-amino-7-oxononanoate (AON), [acyl-carrier protein], and carbon dioxide. This is 8-amino-7-oxononanoate synthase from Thermosipho melanesiensis (strain DSM 12029 / CIP 104789 / BI429).